The primary structure comprises 507 residues: RNA demethylase ALKBH9B (507 aa).

2 disordered regions span residues 76 to 102 (GSER…DNHS) and 145 to 183 (QEDE…LSRD). Basic and acidic residues predominate over residues 89 to 100 (DEKSENGEDCDN). A compositionally biased stretch (acidic residues) spans 145–160 (QEDEFDEEEEEEEEER). The span at 174 to 183 (TPEKPKLSRD) shows a compositional bias: basic and acidic residues. The region spanning 317–414 (VPDSCIVNIY…RISITFRKMD (98 aa)) is the Fe2OG dioxygenase domain. H335, D337, and H396 together coordinate Fe cation. Position 405 (R405) interacts with 2-oxoglutarate. Residues 432–507 (EPLPLDLNRS…MPRPSRRNYG (76 aa)) form a disordered region. Residues 440–450 (RSGSTSRFSRL) are compositionally biased toward polar residues. The span at 497-507 (GMPRPSRRNYG) shows a compositional bias: basic residues.

Belongs to the alkB family. As to quaternary structure, (Microbial infection) Interacts with the capsid protein ORF3b of the alfalfa mosaic virus (AMV). It depends on Fe(2+) as a cofactor.

The protein resides in the cytoplasm. It localises to the P-body. The protein localises to the cytoplasmic granule. The catalysed reaction is an N(6)-methyladenosine in mRNA + 2-oxoglutarate + O2 = an adenosine in mRNA + formaldehyde + succinate + CO2. Functionally, dioxygenase that demethylates RNA by oxidative demethylation: specifically demethylates N(6)-methyladenosine (m6A) RNA, the most prevalent internal modification of messenger RNA (mRNA) in higher eukaryotes. Modulates viral infection of the alfalfa mosaic virus (AMV) and the m6A abundance in its genomic RNAs. This is RNA demethylase ALKBH9B from Arabidopsis thaliana (Mouse-ear cress).